The sequence spans 122 residues: Urocortin (122 aa).

The N-terminal stretch at 1-25 (MIQRGRATLLVALLLLAQLRPESSQ) is a signal peptide. Residues 26–80 (WSPAAAAATGVQDPNLRWSPGVRNQGGGVRALLLLLAERFPRRAGSEPAGERQRR) constitute a propeptide that is removed on maturation. At V120 the chain carries Valine amide.

The protein belongs to the sauvagine/corticotropin-releasing factor/urotensin I family. Interacts with CRHR1 and CRHR2 (via their N-terminal extracellular domain). In terms of tissue distribution, in the organ of Corti, detected in the inner hair cell region (at protein level). Expressed in skin (at protein level).

The protein resides in the secreted. Its function is as follows. Acts in vitro to stimulate the secretion of adrenocorticotropic hormone (ACTH). Binds with high affinity to CRF receptor types 1, 2-alpha, and 2-beta. Plays a role in the establishment of normal hearing thresholds. Reduces food intake and regulates ghrelin levels in gastric body and plasma. The protein is Urocortin (Ucn) of Mus musculus (Mouse).